A 413-amino-acid chain; its full sequence is 1-deoxy-D-xylulose 5-phosphate reductoisomerase (413 aa).

Residues Thr-13, Gly-14, Ser-15, Ile-16, Arg-40, Asn-41, and Asn-127 each coordinate NADPH. Residue Lys-128 coordinates 1-deoxy-D-xylulose 5-phosphate. Glu-129 contacts NADPH. Asp-153 serves as a coordination point for Mn(2+). 1-deoxy-D-xylulose 5-phosphate contacts are provided by Ser-154, Glu-155, Ser-184, and His-207. Glu-155 contributes to the Mn(2+) binding site. Position 213 (Gly-213) interacts with NADPH. Residues Ser-220, Asn-225, Lys-226, and Glu-229 each coordinate 1-deoxy-D-xylulose 5-phosphate. Glu-229 is a Mn(2+) binding site.

It belongs to the DXR family. Requires Mg(2+) as cofactor. Mn(2+) is required as a cofactor.

The enzyme catalyses 2-C-methyl-D-erythritol 4-phosphate + NADP(+) = 1-deoxy-D-xylulose 5-phosphate + NADPH + H(+). It participates in isoprenoid biosynthesis; isopentenyl diphosphate biosynthesis via DXP pathway; isopentenyl diphosphate from 1-deoxy-D-xylulose 5-phosphate: step 1/6. Its function is as follows. Catalyzes the NADPH-dependent rearrangement and reduction of 1-deoxy-D-xylulose-5-phosphate (DXP) to 2-C-methyl-D-erythritol 4-phosphate (MEP). The sequence is that of 1-deoxy-D-xylulose 5-phosphate reductoisomerase from Nitrosomonas europaea (strain ATCC 19718 / CIP 103999 / KCTC 2705 / NBRC 14298).